The primary structure comprises 216 residues: Adenylate kinase (216 aa).

10–15 (GAGKGT) contributes to the ATP binding site. The interval 30–59 (STGDILRENVKKGTALGLKAKSYMDKGELV) is NMP. AMP is bound by residues Thr31, Arg36, 57–59 (ELV), 85–88 (GFPR), and Gln92. Residues 126–163 (GRRICRSCGASYHLVFNPPKAKDLCDSCGGELYQRDDD) form an LID region. Arg127 provides a ligand contact to ATP. Zn(2+) contacts are provided by Cys130 and Cys133. ATP is bound at residue 136 to 137 (SY). The Zn(2+) site is built by Cys150 and Cys153. AMP contacts are provided by Arg160 and Arg171. Residue Lys199 participates in ATP binding.

The protein belongs to the adenylate kinase family. Monomer.

The protein localises to the cytoplasm. It catalyses the reaction AMP + ATP = 2 ADP. It functions in the pathway purine metabolism; AMP biosynthesis via salvage pathway; AMP from ADP: step 1/1. Functionally, catalyzes the reversible transfer of the terminal phosphate group between ATP and AMP. Plays an important role in cellular energy homeostasis and in adenine nucleotide metabolism. In Methanocella arvoryzae (strain DSM 22066 / NBRC 105507 / MRE50), this protein is Adenylate kinase.